A 743-amino-acid chain; its full sequence is Polyribonucleotide nucleotidyltransferase (743 aa).

Positions 489 and 495 each coordinate Mg(2+). A KH domain is found at 556–618 (PRIEKMHIGK…PCIDAAIGMI (63 aa)). Residues 628-698 (GETYPGKITS…KTGKFKLSRK (71 aa)) enclose the S1 motif domain. A disordered region spans residues 704 to 743 (PEGYVEPQPRERRERREGGREGGRNFERRGGDRDHREPRG).

The protein belongs to the polyribonucleotide nucleotidyltransferase family. Requires Mg(2+) as cofactor.

The protein localises to the cytoplasm. The enzyme catalyses RNA(n+1) + phosphate = RNA(n) + a ribonucleoside 5'-diphosphate. Its function is as follows. Involved in mRNA degradation. Catalyzes the phosphorolysis of single-stranded polyribonucleotides processively in the 3'- to 5'-direction. This is Polyribonucleotide nucleotidyltransferase from Porphyromonas gingivalis (strain ATCC 33277 / DSM 20709 / CIP 103683 / JCM 12257 / NCTC 11834 / 2561).